Reading from the N-terminus, the 365-residue chain is Adenosine deaminase (365 aa).

Residues His19 and His21 each coordinate Zn(2+). Substrate contacts are provided by His21, Asp23, and Gly181. His208 provides a ligand contact to Zn(2+). Glu211 serves as the catalytic Proton donor. Asp300 provides a ligand contact to Zn(2+).

The protein belongs to the metallo-dependent hydrolases superfamily. Adenosine and AMP deaminases family. Adenosine deaminase subfamily. The cofactor is Zn(2+).

It carries out the reaction adenosine + H2O + H(+) = inosine + NH4(+). It catalyses the reaction 2'-deoxyadenosine + H2O + H(+) = 2'-deoxyinosine + NH4(+). Catalyzes the hydrolytic deamination of adenosine and 2-deoxyadenosine. In Mycobacterium tuberculosis (strain ATCC 25177 / H37Ra), this protein is Adenosine deaminase.